Reading from the N-terminus, the 229-residue chain is Protein GrpE (229 aa).

Residues 1-89 (MSDFNKDDYL…AEGSSLTPLG (89 aa)) are disordered. Low complexity predominate over residues 24–36 (ASPDADGADAPSD). The span at 39-50 (EQLKDDMLKDAA) shows a compositional bias: basic and acidic residues. The segment covering 65 to 84 (KAAAEATADAASDGDAEGSS) has biased composition (low complexity).

Belongs to the GrpE family. Homodimer.

The protein localises to the cytoplasm. Functionally, participates actively in the response to hyperosmotic and heat shock by preventing the aggregation of stress-denatured proteins, in association with DnaK and GrpE. It is the nucleotide exchange factor for DnaK and may function as a thermosensor. Unfolded proteins bind initially to DnaJ; upon interaction with the DnaJ-bound protein, DnaK hydrolyzes its bound ATP, resulting in the formation of a stable complex. GrpE releases ADP from DnaK; ATP binding to DnaK triggers the release of the substrate protein, thus completing the reaction cycle. Several rounds of ATP-dependent interactions between DnaJ, DnaK and GrpE are required for fully efficient folding. This chain is Protein GrpE, found in Bifidobacterium animalis subsp. lactis (strain AD011).